Consider the following 832-residue polypeptide: Protein P (832 aa).

The segment at methionine 1–glutamine 177 is terminal protein domain (TP). The interval glutamate 178 to leucine 335 is spacer. Residues arginine 241–serine 263 form a disordered region. Residues serine 251–serine 263 are compositionally biased toward polar residues. Residues glutamate 336–glutamine 679 form a polymerase/reverse transcriptase domain (RT) region. A Reverse transcriptase domain is found at glutamate 346–isoleucine 589. Residues aspartate 418, aspartate 540, and aspartate 541 each contribute to the Mg(2+) site.

Belongs to the hepadnaviridae P protein family.

It carries out the reaction DNA(n) + a 2'-deoxyribonucleoside 5'-triphosphate = DNA(n+1) + diphosphate. The enzyme catalyses Endonucleolytic cleavage to 5'-phosphomonoester.. Its activity is regulated as follows. Activated by host HSP70 and HSP40 in vitro to be able to bind the epsilon loop of the pgRNA. Because deletion of the RNase H region renders the protein partly chaperone-independent, the chaperones may be needed indirectly to relieve occlusion of the RNA-binding site by this domain. Inhibited by several reverse-transcriptase inhibitors: Lamivudine, Adefovir and Entecavir. Multifunctional enzyme that converts the viral RNA genome into dsDNA in viral cytoplasmic capsids. This enzyme displays a DNA polymerase activity that can copy either DNA or RNA templates, and a ribonuclease H (RNase H) activity that cleaves the RNA strand of RNA-DNA heteroduplexes in a partially processive 3'- to 5'-endonucleasic mode. Neo-synthesized pregenomic RNA (pgRNA) are encapsidated together with the P protein, and reverse-transcribed inside the nucleocapsid. Initiation of reverse-transcription occurs first by binding the epsilon loop on the pgRNA genome, and is initiated by protein priming, thereby the 5'-end of (-)DNA is covalently linked to P protein. Partial (+)DNA is synthesized from the (-)DNA template and generates the relaxed circular DNA (RC-DNA) genome. After budding and infection, the RC-DNA migrates in the nucleus, and is converted into a plasmid-like covalently closed circular DNA (cccDNA). The activity of P protein does not seem to be necessary for cccDNA generation, and is presumably released from (+)DNA by host nuclear DNA repair machinery. The chain is Protein P from Homo sapiens (Human).